The chain runs to 182 residues: Phospholipase A2 inhibitor gamma subunit A2 (182 aa).

Disulfide bonds link C3/C27, C6/C13, C20/C48, C54/C75, C76/C81, C99/C124, C117/C146, and C150/C172. Residue N157 is glycosylated (N-linked (GlcNAc...) asparagine).

Belongs to the CNF-like-inhibitor family. Heterodimer of subunit A and subunit B.

The protein resides in the secreted. Its function is as follows. Phospholipase A2 (PA2) inhibitor. Inhibits the enzymatic activity of PA2 of Deinagkistrodon acutus. Also shows a wide anti-hemorrhage activities to D.acutus, Naja atra and Agkistrodon halys venom. The native protein is more potent than the recombinant one. The chain is Phospholipase A2 inhibitor gamma subunit A2 from Trimerodytes annularis (Red-bellied annulate keelback).